The following is an 818-amino-acid chain: MVSSVVEKTSVAHKETALILWFEEVGTHDVGLVGGKNSSLGEMIQQLTNKGVNVPSGFATTAYAYRYFIQEAGLEQKLRDLFTDLDVNDMANLQERGHLARQLILDTPFPQNLQTAIAEAYGAMCERYGQKMGRTGVDVAVRSSATAEDLPEASFAGQQETYLNVHSLSCVLESCHKCFASLFTDRAISYRHHNGFDHFAVALSVGVQKMVRSDLATSGVMFSIDTETGFKNAALITAAYGLGENVVQGAVNPDEYFVFKPTLKEGFKPILEKRLGSKAIKMVYDVGGSKLTKNVEVAEPEREKYCINDEEILQLARWACIIEDHYSGVRGVYTPMDIEWAKDGQTGELFIVQARPETVQSQKSANVIKTYELKDHSQVLATGRSVGAAIGQGKAQVIRNVSQINQFRPGEVLITNRTDPDWEPIMKQASAIVTNQGGKTCHAAIIAREMGIPAIVGCGDATDTIKTGEDVTICCSEGDEGSVYSGILNYEVHETELSNLPRTKTQILMNVGNPEQAFGFASYPADGVGLARLEFIIANHIKAHPLALMKFDELEDPLAKAEIAELTKLYAGDRPRFFVDKLAHGIAMIAAAFYPKPVVVRMSDFKSNEYANLLGGRQFEPKEENPMIGWRGASRYYDPNYREAYALECQALKRVRDEMGLTNVIPMIPFCRTPDEGRKVIAEMAKHGLKQGKNGLEIYVMCELPSNVILADEFSEVFDGFSIGSNDLTQLTLGLDRDSSLVAHLFDERNLGVKRMVKMAIETAKANGRKIGICGQAPSDYPEFAEFLVELGIDSISLNPDSVLKTVLRIAEVEKALG.

His-442 serves as the catalytic Tele-phosphohistidine intermediate. Residues Arg-532, Arg-601, Glu-703, Gly-724, Ser-725, Asn-726, and Asp-727 each coordinate substrate. Position 703 (Glu-703) interacts with Mg(2+). Position 727 (Asp-727) interacts with Mg(2+). Cys-774 (proton donor) is an active-site residue.

The protein belongs to the PEP-utilizing enzyme family. The cofactor is Mg(2+).

It carries out the reaction pyruvate + ATP + H2O = phosphoenolpyruvate + AMP + phosphate + 2 H(+). It functions in the pathway carbohydrate biosynthesis; gluconeogenesis. Functionally, catalyzes the phosphorylation of pyruvate to phosphoenolpyruvate. In Synechocystis sp. (strain ATCC 27184 / PCC 6803 / Kazusa), this protein is Phosphoenolpyruvate synthase (ppsA).